Here is a 213-residue protein sequence, read N- to C-terminus: Leucine-rich repeat protein 1 (213 aa).

The signal sequence occupies residues 1-21 (MGAGALGVVAMVAAAVVVAMA). 4 LRR repeats span residues 90–113 (DHLQ…LGNL), 115–137 (NLIS…LGKL), 138–161 (TSLV…LAGI), and 163–186 (SLKV…PFEH).

Interacts with HIR1.

The protein resides in the early endosome membrane. The protein localises to the late endosome membrane. It localises to the cell membrane. Functionally, involved in plant defense response. The chain is Leucine-rich repeat protein 1 from Oryza sativa subsp. indica (Rice).